A 1202-amino-acid chain; its full sequence is Caffeine-induced protein 16 (1202 aa).

Positions 1105–1159 (NIALLLRGFFCYYGLTTQYSFDWEAYMIDISSSQLKRKSTEFKDCPFVVLDPFLK) constitute a PAP-associated domain.

This is Caffeine-induced protein 16 (cid16) from Schizosaccharomyces pombe (strain 972 / ATCC 24843) (Fission yeast).